The sequence spans 1241 residues: ATP-dependent helicase/nuclease subunit A (1241 aa).

One can recognise a UvrD-like helicase ATP-binding domain in the interval serine 12–arginine 485. ATP is bound at residue alanine 33–threonine 40. One can recognise a UvrD-like helicase C-terminal domain in the interval glycine 505–glycine 805.

The protein belongs to the helicase family. AddA subfamily. In terms of assembly, heterodimer of AddA and AddB/RexB. Mg(2+) serves as cofactor.

It carries out the reaction Couples ATP hydrolysis with the unwinding of duplex DNA by translocating in the 3'-5' direction.. It catalyses the reaction ATP + H2O = ADP + phosphate + H(+). Functionally, the heterodimer acts as both an ATP-dependent DNA helicase and an ATP-dependent, dual-direction single-stranded exonuclease. Recognizes the chi site generating a DNA molecule suitable for the initiation of homologous recombination. The AddA nuclease domain is required for chi fragment generation; this subunit has the helicase and 3' -&gt; 5' nuclease activities. The sequence is that of ATP-dependent helicase/nuclease subunit A from Bacillus thuringiensis (strain Al Hakam).